The following is a 423-amino-acid chain: Imidazolonepropionase (423 aa).

Positions 78 and 80 each coordinate Fe(3+). The Zn(2+) site is built by histidine 78 and histidine 80. Arginine 87, tyrosine 150, and histidine 183 together coordinate 4-imidazolone-5-propanoate. Tyrosine 150 is a binding site for N-formimidoyl-L-glutamate. Histidine 247 provides a ligand contact to Fe(3+). Histidine 247 serves as a coordination point for Zn(2+). Glutamate 250 is a binding site for 4-imidazolone-5-propanoate. Fe(3+) is bound at residue aspartate 322. Aspartate 322 lines the Zn(2+) pocket. N-formimidoyl-L-glutamate is bound by residues asparagine 324 and glycine 326. Serine 327 serves as a coordination point for 4-imidazolone-5-propanoate.

The protein belongs to the metallo-dependent hydrolases superfamily. HutI family. Zn(2+) serves as cofactor. Fe(3+) is required as a cofactor.

It localises to the cytoplasm. The enzyme catalyses 4-imidazolone-5-propanoate + H2O = N-formimidoyl-L-glutamate. The protein operates within amino-acid degradation; L-histidine degradation into L-glutamate; N-formimidoyl-L-glutamate from L-histidine: step 3/3. Functionally, catalyzes the hydrolytic cleavage of the carbon-nitrogen bond in imidazolone-5-propanoate to yield N-formimidoyl-L-glutamate. It is the third step in the universal histidine degradation pathway. This chain is Imidazolonepropionase, found in Bacillus mycoides (strain KBAB4) (Bacillus weihenstephanensis).